The sequence spans 139 residues: Holo-[acyl-carrier-protein] synthase (139 aa).

Mg(2+)-binding residues include Asp8 and Glu57.

Belongs to the P-Pant transferase superfamily. AcpS family. It depends on Mg(2+) as a cofactor.

The protein localises to the cytoplasm. The enzyme catalyses apo-[ACP] + CoA = holo-[ACP] + adenosine 3',5'-bisphosphate + H(+). Transfers the 4'-phosphopantetheine moiety from coenzyme A to a Ser of acyl-carrier-protein. The protein is Holo-[acyl-carrier-protein] synthase of Sinorhizobium medicae (strain WSM419) (Ensifer medicae).